The following is a 56-amino-acid chain: Turripeptide XIV-01 (56 aa).

The signal sequence occupies residues Met-1 to Ala-21. The propeptide occupies Lys-22–Glu-30.

In terms of processing, contains 2 disulfide bonds. Expressed by the venom duct.

The protein resides in the secreted. The chain is Turripeptide XIV-01 from Gemmula speciosa (Splendid gem-turris).